A 444-amino-acid chain; its full sequence is L-cysteine:1D-myo-inositol 2-amino-2-deoxy-alpha-D-glucopyranoside ligase (444 aa).

The segment covering 1 to 13 (MPCDRKTSPDQHH) has biased composition (basic and acidic residues). The interval 1–21 (MPCDRKTSPDQHHALQIHRHH) is disordered. Cysteine 75 lines the Zn(2+) pocket. Residues 75 to 78 (CGIT), threonine 90, and 113 to 115 (NIT) each bind L-cysteinyl-5'-AMP. The short motif at 77 to 87 (ITPYDATHLGH) is the 'HIGH' region element. The 'ERGGDP' region motif lies at 219–224 (ERGGDP). Tryptophan 259 provides a ligand contact to L-cysteinyl-5'-AMP. Residue cysteine 263 participates in Zn(2+) binding. 281–283 (GSD) is an L-cysteinyl-5'-AMP binding site. Histidine 288 is a binding site for Zn(2+). An L-cysteinyl-5'-AMP-binding site is contributed by isoleucine 315. A 'KMSKS' region motif is present at residues 321–325 (KMSKS).

It belongs to the class-I aminoacyl-tRNA synthetase family. MshC subfamily. Monomer. Zn(2+) is required as a cofactor.

It carries out the reaction 1D-myo-inositol 2-amino-2-deoxy-alpha-D-glucopyranoside + L-cysteine + ATP = 1D-myo-inositol 2-(L-cysteinylamino)-2-deoxy-alpha-D-glucopyranoside + AMP + diphosphate + H(+). In terms of biological role, catalyzes the ATP-dependent condensation of GlcN-Ins and L-cysteine to form L-Cys-GlcN-Ins. This is L-cysteine:1D-myo-inositol 2-amino-2-deoxy-alpha-D-glucopyranoside ligase from Mycolicibacterium gilvum (strain PYR-GCK) (Mycobacterium gilvum (strain PYR-GCK)).